The primary structure comprises 391 residues: Succinyl-diaminopimelate desuccinylase (391 aa).

A Zn(2+)-binding site is contributed by histidine 78. Aspartate 80 is a catalytic residue. Aspartate 111 contacts Zn(2+). Glutamate 145 (proton acceptor) is an active-site residue. Zn(2+)-binding residues include glutamate 146, glutamate 174, and histidine 360.

Belongs to the peptidase M20A family. DapE subfamily. In terms of assembly, homodimer. Requires Zn(2+) as cofactor. It depends on Co(2+) as a cofactor.

The enzyme catalyses N-succinyl-(2S,6S)-2,6-diaminopimelate + H2O = (2S,6S)-2,6-diaminopimelate + succinate. Its pathway is amino-acid biosynthesis; L-lysine biosynthesis via DAP pathway; LL-2,6-diaminopimelate from (S)-tetrahydrodipicolinate (succinylase route): step 3/3. Its function is as follows. Catalyzes the hydrolysis of N-succinyl-L,L-diaminopimelic acid (SDAP), forming succinate and LL-2,6-diaminopimelate (DAP), an intermediate involved in the bacterial biosynthesis of lysine and meso-diaminopimelic acid, an essential component of bacterial cell walls. The chain is Succinyl-diaminopimelate desuccinylase from Albidiferax ferrireducens (strain ATCC BAA-621 / DSM 15236 / T118) (Rhodoferax ferrireducens).